The primary structure comprises 801 residues: PR domain zinc finger protein 4 (801 aa).

The SET domain occupies 412-529 (KQLVLRQSIV…PENELLFYYS (118 aa)). The segment at 545–566 (HLCNCGKECNSYTEFKAHLTSH) adopts a C2H2-type 1; atypical zinc-finger fold. 4 C2H2-type zinc fingers span residues 618–640 (HKCD…LKIH), 646–668 (YRCT…MVIH), 674–696 (LKCD…VLIH), and 702–724 (IKCP…LNSH). A C2H2-type 6; atypical zinc finger spans residues 730 to 752 (YVCEKCTKAYLTKYHLTRHLKTC). Residues 751–782 (TCKGPTSSSSAPEEEEEDDSEEEDLADSVGTE) form a disordered region. A compositionally biased stretch (acidic residues) spans 762 to 776 (PEEEEEDDSEEEDLA).

Belongs to the class V-like SAM-binding methyltransferase superfamily.

The protein resides in the nucleus. Its function is as follows. May function as a transcription factor involved in cell differentiation. The polypeptide is PR domain zinc finger protein 4 (PRDM4) (Pongo abelii (Sumatran orangutan)).